The sequence spans 141 residues: Large ribosomal subunit protein uL11 (141 aa).

The protein belongs to the universal ribosomal protein uL11 family. As to quaternary structure, part of the ribosomal stalk of the 50S ribosomal subunit. Interacts with L10 and the large rRNA to form the base of the stalk. L10 forms an elongated spine to which L12 dimers bind in a sequential fashion forming a multimeric L10(L12)X complex. One or more lysine residues are methylated.

Its function is as follows. Forms part of the ribosomal stalk which helps the ribosome interact with GTP-bound translation factors. This chain is Large ribosomal subunit protein uL11, found in Pediococcus pentosaceus (strain ATCC 25745 / CCUG 21536 / LMG 10740 / 183-1w).